The chain runs to 527 residues: Tyrosine-protein kinase TXK (527 aa).

The interval 58 to 81 (TQSNRGGVQPSKRKPLPPLPQEPP) is disordered. In terms of domain architecture, SH3 spans 82-142 (DERIQVKALY…PSNYVTENRL (61 aa)). Tyr-91 is subject to Phosphotyrosine; by autocatalysis. The 97-residue stretch at 150-246 (WYHKNITRNQ…GLISRLRYPI (97 aa)) folds into the SH2 domain. The Protein kinase domain maps to 271 to 527 (LAFVKEIGSG…QVLTEIAETW (257 aa)). ATP contacts are provided by residues 277-285 (IGSGQFGVV) and Lys-299. Asp-390 serves as the catalytic Proton acceptor. A Phosphotyrosine; by FYN and autocatalysis modification is found at Tyr-420.

This sequence belongs to the protein kinase superfamily. Tyr protein kinase family. TEC subfamily. Interacts with PARP1 and EEF1A1. Interacts with SH2D2A. Interacts with FYN. Post-translationally, phosphorylated at Tyr-420 by FYN. Autophosphorylation at Tyr-91 is critical for the activation of TXK, leading to the up-regulation of IFN-gamma gene transcription. In terms of processing, the cysteine string at the N-terminus is palmitoylated and required for the proper subcellular location. Expressed in early thymocytes, T-cells and mast cells.

The protein resides in the cytoplasm. It is found in the nucleus. It localises to the cell membrane. The enzyme catalyses L-tyrosyl-[protein] + ATP = O-phospho-L-tyrosyl-[protein] + ADP + H(+). With respect to regulation, activated by phosphorylation by FYN. Functionally, non-receptor tyrosine kinase that plays a redundant role with ITK in regulation of the adaptive immune response. Regulates the development, function and differentiation of conventional T-cells and nonconventional NKT-cells. When antigen presenting cells (APC) activate T-cell receptor (TCR), a series of phosphorylation leads to the recruitment of TXK to the cell membrane, where it is phosphorylated at Tyr-420. Phosphorylation leads to TXK full activation. Also contributes to signaling from many receptors and participates in multiple downstream pathways, including regulation of the actin cytoskeleton. Like ITK, can phosphorylate PLCG1, leading to its localization in lipid rafts and activation, followed by subsequent cleavage of its substrates. In turn, the endoplasmic reticulum releases calcium in the cytoplasm and the nuclear activator of activated T-cells (NFAT) translocates into the nucleus to perform its transcriptional duty. Plays a role in the positive regulation of IFNG transcription in T-helper 1 cells as part of an IFNG promoter-binding complex with PARP1 and EEF1A1. Within the complex, phosphorylates both PARP1 and EEF1A1. Also phosphorylates key sites in LCP2 leading to the up-regulation of Th1 preferred cytokine IL-2. Phosphorylates 'Tyr-201' of CTLA4 which leads to the association of PI-3 kinase with the CTLA4 receptor. This Mus musculus (Mouse) protein is Tyrosine-protein kinase TXK (Txk).